The chain runs to 562 residues: Urocanate hydratase (562 aa).

NAD(+) contacts are provided by residues 52–53 (GG), glutamine 130, 176–178 (GMG), glutamate 196, arginine 201, 242–243 (NA), 263–267 (QTSAH), 273–274 (YL), and tyrosine 322. The active site involves cysteine 410. Glycine 492 contributes to the NAD(+) binding site.

It belongs to the urocanase family. Requires NAD(+) as cofactor.

It localises to the cytoplasm. The enzyme catalyses 4-imidazolone-5-propanoate = trans-urocanate + H2O. The protein operates within amino-acid degradation; L-histidine degradation into L-glutamate; N-formimidoyl-L-glutamate from L-histidine: step 2/3. Its function is as follows. Catalyzes the conversion of urocanate to 4-imidazolone-5-propionate. This is Urocanate hydratase from Klebsiella pneumoniae (strain 342).